Consider the following 360-residue polypeptide: Arginase, non-hepatic 2 (360 aa).

Residues His122, Asp145, His147, and Asp149 each contribute to the Mn(2+) site. Substrate is bound by residues His147–Asn151, Ser158–Asn160, and Asp204. Residues Asp253 and Asp255 each coordinate Mn(2+). Substrate contacts are provided by Thr267 and Glu298.

The protein belongs to the arginase family. In terms of assembly, homotrimer. Requires Mn(2+) as cofactor. Expressed at differing tadpole stages in tail, intestine, hindlimb and trunk region. Strongest in tadpole tail.

It catalyses the reaction L-arginine + H2O = urea + L-ornithine. It participates in nitrogen metabolism; urea cycle; L-ornithine and urea from L-arginine: step 1/1. Its function is as follows. As well as its role in the urea cycle, may be involved in tissue remodeling. This Xenopus laevis (African clawed frog) protein is Arginase, non-hepatic 2 (arg2-b).